The following is an 883-amino-acid chain: Glutamate receptor 2 (883 aa).

Residues 1–24 (MQKIMHISVLLSPVLWGLIFGVSS) form the signal peptide. Topologically, residues 25–543 (NSIQIGGLFP…GVFSFLDPLA (519 aa)) are extracellular. A disulfide bridge connects residues cysteine 78 and cysteine 330. 4 N-linked (GlcNAc...) asparagine glycosylation sites follow: asparagine 256, asparagine 370, asparagine 406, and asparagine 413. Residues proline 499, threonine 501, and arginine 506 each contribute to the L-glutamate site. The chain crosses the membrane as a helical span at residues 544–564 (YEIWMCIVFAYIGVSVVLFLV). Residues 565–591 (SRFSPYEWHTEEFEDGRETQSSESTNE) lie on the Cytoplasmic side of the membrane. Positions 592–607 (FGIFNSLWFSLGAFMQ) form an intramembrane region, helical; Pore-forming. An intramembrane segment occupies 608–610 (QGC). The S-palmitoyl cysteine moiety is linked to residue cysteine 610. Over 611 to 616 (DISPRS) the chain is Cytoplasmic. Residues 617–637 (LSGRIVGGVWWFFTLIIISSY) form a helical membrane-spanning segment. Over 638 to 812 (TANLAAFLTV…EKTSALSLSN (175 aa)) the chain is Extracellular. Positions 675 and 676 each coordinate L-glutamate. A Phosphoserine; by PKC modification is found at serine 683. A Phosphoserine; by PKG modification is found at serine 717. L-glutamate is bound at residue glutamate 726. Cysteine 739 and cysteine 794 are disulfide-bonded. A helical transmembrane segment spans residues 813 to 833 (VAGVFYILVGGLGLAMLVALI). Residues 834-883 (EFCYKSRAEAKRMKVAKNAQNINPSSSQNSQNFATYKEGYNVYGIESVKI) are Cytoplasmic-facing. A lipid anchor (S-palmitoyl cysteine) is attached at cysteine 836. A phosphoserine mark is found at serine 860 and serine 863. The segment at 867–877 (ATYKEGYNVYG) is required for interaction with IQSEC1. Tyrosine 876 is subject to Phosphotyrosine. Serine 880 bears the Phosphoserine mark.

Belongs to the glutamate-gated ion channel (TC 1.A.10.1) family. GRIA2 subfamily. As to quaternary structure, homotetramer or heterotetramer of pore-forming glutamate receptor subunits. Tetramers may be formed by the dimerization of dimers. May interact with MPP4. Forms a ternary complex with GRIP1 and CSPG4. Interacts with ATAD1 in an ATP-dependent manner. ATAD1-catalyzed ATP hydrolysis disrupts binding to ATAD1 and to GRIP1 and leads to AMPAR complex disassembly. Interacts with GRIP1 and GRIP2. Interacts with NSF via its C-terminus. Isoform 1, but not isoform 3, interacts with PICK1. Interacts with CACNG2. Interacts with GRIA1 and SYNDIG1. Part of a complex containing GRIA2, NSF and NAPA and/or NAPB. Interacts with SNX27 (via PDZ domain); the interaction is required for recycling to the plasma membrane when endocytosed and prevent degradation in lysosomes. Interacts with LRFN1. Found in a complex with GRIA1, GRIA3, GRIA4, CNIH2, CNIH3, CACNG2, CACNG3, CACNG4, CACNG5, CACNG7 and CACNG8. Interacts with CACNG5. Interacts with OLFM2. Interacts with AP4B1, AP4E1 and AP4M1; probably indirect it mediates the somatodendritic localization of GRIA2 in neurons. Forms a complex with GRIP1, NSG1 and STX12; controls the intracellular fate of AMPAR and the endosomal sorting of the GRIA2 subunit toward recycling and membrane targeting. Interacts with IQSEC1; the interaction is required for ARF6 activation. Interacts (heterotetramer form) with CNIH2 and CNIH3; this interaction promotes expression at the plasma membrane and extensively modulates their gating properties by slowing deactivation and desensitization kinetics. In terms of processing, palmitoylated. Depalmitoylated upon L-glutamate stimulation. ZDHHC3/GODZ specifically palmitoylates Cys-610, which leads to Golgi retention and decreased cell surface expression. In contrast, Cys-836 palmitoylation does not affect cell surface expression but regulates stimulation-dependent endocytosis. N-glycosylated. Post-translationally, ubiquitinated by RNF167, leading to its degradation. In terms of processing, phosphorylation at Tyr-876 is required for interaction with IQSEC1 and ARF6 activation, which in turn triggers AMPAR internalization for persistent synaptic depression. As to expression, detected in brain cortex, hippocampus and cerebellum (at protein level). Detected in hippocampus.

The protein localises to the cell membrane. It is found in the postsynaptic cell membrane. The protein resides in the postsynaptic density membrane. It catalyses the reaction Ca(2+)(in) = Ca(2+)(out). The catalysed reaction is Na(+)(in) = Na(+)(out). In terms of biological role, ionotropic glutamate receptor that functions as a ligand-gated cation channel, gated by L-glutamate and glutamatergic agonists such as alpha-amino-3-hydroxy-5-methyl-4-isoxazolepropionic acid (AMPA), quisqualic acid, and kainic acid. L-glutamate acts as an excitatory neurotransmitter at many synapses in the central nervous system and plays an important role in fast excitatory synaptic transmission. Binding of the excitatory neurotransmitter L-glutamate induces a conformation change, leading to the opening of the cation channel, and thereby converts the chemical signal to an electrical impulse upon entry of monovalent and divalent cations such as sodium and calcium. The receptor then desensitizes rapidly and enters in a transient inactive state, characterized by the presence of bound agonist. In the presence of CACNG4 or CACNG7 or CACNG8, shows resensitization which is characterized by a delayed accumulation of current flux upon continued application of L-glutamate. Through complex formation with NSG1, GRIP1 and STX12 controls the intracellular fate of AMPAR and the endosomal sorting of the GRIA2 subunit toward recycling and membrane targeting. In Mus musculus (Mouse), this protein is Glutamate receptor 2.